The sequence spans 520 residues: Protein RCC2 (520 aa).

The tract at residues methionine 1–glycine 78 is disordered. At serine 14 the chain carries Phosphoserine. Position 18 is a phosphothreonine (threonine 18). Residues glycine 22–arginine 34 are compositionally biased toward basic residues. Serine 41, serine 42, serine 43, serine 44, serine 48, and serine 49 each carry phosphoserine. The span at arginine 69–glycine 78 shows a compositional bias: low complexity. N6-acetyllysine is present on residues lysine 90 and lysine 122. RCC1 repeat units follow at residues lysine 101–isoleucine 163, glutamate 166–aspartate 217, glycine 219–cysteine 269, glycine 271–serine 345, glutamine 346–glutamate 399, glycine 401–aspartate 445, and glutamate 446–arginine 499. An N6-acetyllysine modification is found at lysine 291. The segment at lysine 316–leucine 323 is required for interaction with RAC1. At threonine 340 the chain carries Phosphothreonine. The residue at position 375 (lysine 375) is an N6-acetyllysine.

In terms of assembly, interacts with RAC1. Interacts with nucleotide-free and with GDP and GTP-bound forms of RAC1, with a slight preference for GDP-bound RAC1. Binds preferentially to the nucleotide-free form of RAC1. Interacts with CORO1C. Interacts with microtubules.

It is found in the nucleus. The protein localises to the nucleolus. It localises to the cytoplasm. Its subcellular location is the cytoskeleton. The protein resides in the chromosome. It is found in the centromere. The protein localises to the spindle. It localises to the midbody. Its subcellular location is the cell membrane. Its function is as follows. Multifunctional protein that may affect its functions by regulating the activity of small GTPases, such as RAC1 and RALA. Required for normal progress through the cell cycle, both during interphase and during mitosis. Required for the presence of normal levels of MAD2L1, AURKB and BIRC5 on inner centromeres during mitosis, and for normal attachment of kinetochores to mitotic spindles. Required for normal organization of the microtubule cytoskeleton in interphase cells. Functions as a guanine nucleotide exchange factor (GEF) for RALA. Interferes with the activation of RAC1 by guanine nucleotide exchange factors. Prevents accumulation of active, GTP-bound RAC1, and suppresses RAC1-mediated reorganization of the actin cytoskeleton and formation of membrane protrusions. Required for normal cellular responses to contacts with the extracellular matrix of adjacent cells, and for directional cell migration in response to a fibronectin gradient (in vitro). The polypeptide is Protein RCC2 (Rcc2) (Mus musculus (Mouse)).